The following is a 564-amino-acid chain: MAHSKEIPSFRWTQSLRRGLSQVHPTVKTDVLKDAKLIADSIDFNQVSQVQRALRKNKRGEEDLNKLRDLNKEVDRLMSMKSIQKNTIFKIGDLGRDELMELASDLEKLKNKIKRTESGPQGLYMGNLSQLQLTKRSEILKTLGFQQQRGAGNGVVRIWDVSDPSKLNNQFGSMPALTIACMTVQGGETMNSVVQALTSLGLLYTVKYPNLNDLDKLTLEHECLQIVTKDESSINISGYNFSLSAAVKAGASILDGGNMLETIRVTPDNFSSLIKSTLQVKRKEGMFIDEKPGNRNPYENLLYKLCLSGDGWPYIGSRSQILGRSWDNTSVDLTKKPQVGPRQPEKNGQNLRLANLTEMQEAVIKEAVKKLDPTNTLWLDIEGPPTDPVELALYQPANKHYIHCFRKPHDEKGFKNGSRHSHGILMQDIEDAMPGVLSYVIGLLPQDMVITTQGSDDIRKLLDIHGRKDLKLVDVKLTSDQARLYDQQIWEKFGHLCKHHNGVVVNKKKREKDSPFKLSSGEPHCALLDCIMYQSVMDGKMVDEEPVALLPLSLLFLPKAAFAL.

A binding site for the cap structure m7GTP region spans residues 54–236 (LRKNKRGEED…VTKDESSINI (183 aa)). Positions 380 and 382 each coordinate Mn(2+). 4 residues coordinate Zn(2+): E390, C497, H500, and C525. Residue D529 coordinates Mn(2+).

The protein belongs to the arenaviridae nucleocapsid protein family. In terms of assembly, homomultimerizes to form the nucleocapsid. Binds to viral genomic RNA. Interacts with glycoprotein G2. Interacts with protein Z; this interaction probably directs the encapsidated genome to budding sites. Interacts with protein L; this interaction does not interfere with Z-L interaction. Interacts with host IKBKE (via Protein kinase domain); the interaction inhibits IKBKE kinase activity.

It localises to the virion. The protein resides in the host cytoplasm. In terms of biological role, encapsidates the genome, protecting it from nucleases. The encapsidated genomic RNA is termed the nucleocapsid (NC). Serves as template for viral transcription and replication. The increased presence of protein N in host cell does not seem to trigger the switch from transcription to replication as observed in other negative strain RNA viruses. Through the interaction with host IKBKE, strongly inhibits the phosphorylation and nuclear translocation of host IRF3, a protein involved in interferon activation pathway, leading to the inhibition of interferon-beta and IRF3-dependent promoters activation. Also encodes a functional 3'-5' exoribonuclease that degrades preferentially dsRNA substrates and thereby participates in the suppression of interferon induction. The polypeptide is Nucleoprotein (Calomys callosus (Large vesper mouse)).